Consider the following 310-residue polypeptide: Acetylglutamate kinase (310 aa).

Substrate-binding positions include 83 to 84 (GG), arginine 105, and asparagine 207.

This sequence belongs to the acetylglutamate kinase family. ArgB subfamily.

The protein resides in the cytoplasm. The catalysed reaction is N-acetyl-L-glutamate + ATP = N-acetyl-L-glutamyl 5-phosphate + ADP. Its pathway is amino-acid biosynthesis; L-arginine biosynthesis; N(2)-acetyl-L-ornithine from L-glutamate: step 2/4. In terms of biological role, catalyzes the ATP-dependent phosphorylation of N-acetyl-L-glutamate. The polypeptide is Acetylglutamate kinase (Ralstonia nicotianae (strain ATCC BAA-1114 / GMI1000) (Ralstonia solanacearum)).